A 900-amino-acid chain; its full sequence is Translation initiation factor IF-2 (900 aa).

Over residues 80–95 (LEEQSRKTVEKEDQLR) the composition is skewed to basic and acidic residues. Disordered stretches follow at residues 80–106 (LEEQSRKTVEKEDQLRDTLQPSPVPGR), 149–169 (AVEAEPEVAPPSLEAEEDSPV), and 221–268 (DEFD…VDEK). Positions 253–262 (GKKKGKKKKK) are enriched in basic residues. The 171-residue stretch at 397 to 567 (TRPPVVTIMG…LTEAEVRELK (171 aa)) folds into the tr-type G domain. A G1 region spans residues 406–413 (GHVDHGKT). 406–413 (GHVDHGKT) contributes to the GTP binding site. A G2 region spans residues 431-435 (GITQH). The segment at 453 to 456 (DTPG) is G3. Residues 453–457 (DTPGH) and 507–510 (NKID) each bind GTP. Positions 507–510 (NKID) are G4. The interval 543–545 (SAK) is G5.

It belongs to the TRAFAC class translation factor GTPase superfamily. Classic translation factor GTPase family. IF-2 subfamily.

The protein localises to the cytoplasm. One of the essential components for the initiation of protein synthesis. Protects formylmethionyl-tRNA from spontaneous hydrolysis and promotes its binding to the 30S ribosomal subunits. Also involved in the hydrolysis of GTP during the formation of the 70S ribosomal complex. The protein is Translation initiation factor IF-2 of Chlorobium phaeovibrioides (strain DSM 265 / 1930) (Prosthecochloris vibrioformis (strain DSM 265)).